The following is a 409-amino-acid chain: MYFQSLSADPLDSVNTTTDFNQLAQLLLMLTNSSSKETIATHVVTNSVPSAFQFDWSSHFKEEYDLVEKLNSPQYTNLTSISPSSSTDSNNLILRQIQIPKIEPALLNQCCLCTFAIVDKEISVVDGKYYHNNCLRCQMCDIPFEYSDKCYVRDGVFLCRADHAKRYQKCCRKCEIPLNREDMVMKAKEMIFHHACFVCFICGIKLNPGDYYTMSPQGHLYCHAHYNAVRSTVLCEEAAVATVPAVVAPPPPPPTTTTAPPPAAPEQPPREASTEAEASTDEDGNGSGSQRSKRMRTSFKHHQLRAMKTYFALNHNPDAKDLKQLAAKTNLTKRVLQVWFQNARAKYRRELHDGGRSSSPLCVSAPLASMDMNPPLSSSSSGHSTDGYQLNTPPLSSEIYSPNSNYTHL.

LIM zinc-binding domains are found at residues 108–169 and 171–232; these read NQCC…RYQK and CRKC…VRST. 2 disordered regions span residues 245-299 and 372-409; these read AVVA…RTSF and MNPPLSSSSSGHSTDGYQLNTPPLSSEIYSPNSNYTHL. Residues 247 to 267 are compositionally biased toward pro residues; the sequence is VAPPPPPPTTTTAPPPAAPEQ. Positions 292-351 form a DNA-binding region, homeobox; it reads SKRMRTSFKHHQLRAMKTYFALNHNPDAKDLKQLAAKTNLTKRVLQVWFQNARAKYRREL. A compositionally biased stretch (polar residues) spans 382 to 409; it reads GHSTDGYQLNTPPLSSEIYSPNSNYTHL.

As to expression, expressed in the AIA, AIN and AIY interneurons, and in the NSM neurons. Expressed also in ADL and ASI sensory neurons in 60-70% of L2 larvae. Expression is also detected in head muscles of embryos and some early larvae but not late larvae or adults.

It localises to the nucleus. The protein localises to the perikaryon. It is found in the cell projection. The protein resides in the axon. In terms of biological role, transcription factor. Binds to a sequence motif, 5'-TTATTGGCTTCGTTAA-3', which may be involved in AIY interneuron function, in the regulatory elements of target genes; binding is more efficient, in vitro, together with homeobox protein ceh-10. Required for specification of the AIA and AIY interneurons and the NSM neurons. Positively regulates the expression of a number of genes including ceh-10, ceh-23, kal-1, hen-1, ser-2, unc-17 and sra-11 in AIY neurons, and cat-4, flp-4, bas-1, ptps-1 and mgl-1 in NSM neurons. In concert with WNT/beta-catenin signaling, initiates expression of homeobox ceh-10 in AIY, but not in the sister cells, SMDD motor neurons. Also acts in an autoregulatory feedback loop to maintain its own expression. Plays a role in the thermotactic response, olfactory imprinting, regulation of longevity, control of dauer formation and axon outgrowth and pathfinding. Not required for normal chemosensory behavior. This chain is LIM/homeobox protein ttx-3, found in Caenorhabditis elegans.